The following is a 137-amino-acid chain: Dormancy-associated protein homolog 3 (137 aa).

Disordered regions lie at residues 1–55 (MGLL…DSLP) and 69–137 (KPPG…TYGM). Residues 32–43 (FRPSSGNDQSEA) are compositionally biased toward polar residues. A compositionally biased stretch (low complexity) spans 70-87 (PPGYQGSSAPASPAGSTP). The residue at position 81 (Ser-81) is a Phosphoserine. The segment covering 88-97 (PLSPFSPPLS) has biased composition (pro residues). Residues 104-118 (EPFRFRRRSTSDAFE) are compositionally biased toward basic and acidic residues. Over residues 127-137 (GPRSSPPTYGM) the composition is skewed to polar residues.

It belongs to the DRM1/ARP family.

The chain is Dormancy-associated protein homolog 3 from Arabidopsis thaliana (Mouse-ear cress).